Reading from the N-terminus, the 216-residue chain is Ras-related protein Rab-11A (216 aa).

Gly2 is modified (N-acetylglycine). GTP is bound by residues Ser20, Gly21, Val22, Gly23, Lys24, Ser25, Asn26, Asn37, Leu38, Ser40, Ser42, and Thr43. Ser25 is a Mg(2+) binding site. Residues 36–47 (FNLESKSTIGVE) carry the Switch 1 motif. Positions 43 and 66 each coordinate Mg(2+). A Switch 2 motif is present at residues 67–86 (TAGQERYRAITSAYYRGAVG). GTP contacts are provided by Gly69, Asn124, Lys125, Asp127, Ala155, and Leu156. The tract at residues 183–208 (DRRENDMSPSNNVVPIHVPPTTENKP) is disordered. Residues Cys212 and Cys213 are each lipidated (S-geranylgeranyl cysteine). At Cys213 the chain carries Cysteine methyl ester. Positions 214–216 (QNI) are cleaved as a propeptide — removed in mature form.

This sequence belongs to the small GTPase superfamily. Rab family. The cofactor is Mg(2+).

The protein resides in the cell membrane. It is found in the endosome membrane. Its subcellular location is the recycling endosome membrane. The protein localises to the cleavage furrow. It localises to the cytoplasmic vesicle. The protein resides in the phagosome. It is found in the cytoplasmic vesicle membrane. Its subcellular location is the golgi apparatus. The protein localises to the trans-Golgi network. The catalysed reaction is GTP + H2O = GDP + phosphate + H(+). Its activity is regulated as follows. Regulated by guanine nucleotide exchange factors (GEFs) which promote the exchange of bound GDP for free GTP. Regulated by GTPase activating proteins (GAPs) which increase the GTP hydrolysis activity. Inhibited by GDP dissociation inhibitors (GDIs) which prevent Rab-GDP dissociation. The small GTPases Rab are key regulators of intracellular membrane trafficking, from the formation of transport vesicles to their fusion with membranes. Rabs cycle between an inactive GDP-bound form and an active GTP-bound form that is able to recruit to membranes different set of downstream effectors directly responsible for vesicle formation, movement, tethering and fusion. The small Rab GTPase RAB11A regulates endocytic recycling. May also be involved in the regulation of preciliary trafficking and neosynthesized protein export. The sequence is that of Ras-related protein Rab-11A (RAB11A) from Gallus gallus (Chicken).